The primary structure comprises 301 residues: Mating type protein mtA-1 (301 aa).

Positions 49–104 (APKKKVNGFMGFRSYYSSLFSQFPQKARSPFMTILWQHDPFHNEWDFMCSVYSSIR) form a DNA-binding region, alpha box.

The protein belongs to the MATALPHA1 family.

Its subcellular location is the nucleus. Mating type proteins are sequence specific DNA-binding proteins that act as master switches in fungal differentiation by controlling gene expression in a cell type-specific fashion. Transcriptional activator that induces the transcription of alpha-specific genes. In Sordaria fimicola, this protein is Mating type protein mtA-1 (MTA1).